A 317-amino-acid chain; its full sequence is 2,3-dihydroxyphenylpropionate/2,3-dihydroxicinnamic acid 1,2-dioxygenase (317 aa).

The Proton donor role is filled by histidine 115. Histidine 179 functions as the Proton acceptor in the catalytic mechanism.

It belongs to the LigB/MhpB extradiol dioxygenase family. In terms of assembly, homotetramer. Fe(2+) serves as cofactor.

It carries out the reaction 3-(2,3-dihydroxyphenyl)propanoate + O2 = (2Z,4E)-2-hydroxy-6-oxonona-2,4-dienedioate + H(+). The enzyme catalyses (2E)-3-(2,3-dihydroxyphenyl)prop-2-enoate + O2 = (2Z,4E,7E)-2-hydroxy-6-oxonona-2,4,7-trienedioate + H(+). Its pathway is aromatic compound metabolism; 3-phenylpropanoate degradation. Its function is as follows. Catalyzes the non-heme iron(II)-dependent oxidative cleavage of 2,3-dihydroxyphenylpropionic acid and 2,3-dihydroxicinnamic acid into 2-hydroxy-6-ketononadienedioate and 2-hydroxy-6-ketononatrienedioate, respectively. This is 2,3-dihydroxyphenylpropionate/2,3-dihydroxicinnamic acid 1,2-dioxygenase from Photorhabdus laumondii subsp. laumondii (strain DSM 15139 / CIP 105565 / TT01) (Photorhabdus luminescens subsp. laumondii).